The sequence spans 235 residues: Large ribosomal subunit protein uL1 (235 aa).

The protein belongs to the universal ribosomal protein uL1 family. Part of the 50S ribosomal subunit.

Functionally, binds directly to 23S rRNA. The L1 stalk is quite mobile in the ribosome, and is involved in E site tRNA release. Protein L1 is also a translational repressor protein, it controls the translation of the L11 operon by binding to its mRNA. This Mycolicibacterium paratuberculosis (strain ATCC BAA-968 / K-10) (Mycobacterium paratuberculosis) protein is Large ribosomal subunit protein uL1.